We begin with the raw amino-acid sequence, 1093 residues long: Protein translocase subunit SecA (1093 aa).

ATP contacts are provided by residues glutamine 84, 102 to 106 (GEGKT), and aspartate 491. Disordered stretches follow at residues 837 to 869 (QNLQEQSYKDPASDNLENNPEPKTGSQSQSEHE) and 904 to 1062 (SELE…TSEA). Composition is skewed to basic and acidic residues over residues 904–937 (SELESKEKEQEEVKNQETQPKENKPAETKVDATK), 944–971 (EELKAKEVATVVEEKPKKVSKAKSEKLK), and 978–1062 (PKDL…TSEA).

This sequence belongs to the SecA family. In terms of assembly, monomer and homodimer. Part of the essential Sec protein translocation apparatus which comprises SecA, SecYEG and auxiliary proteins SecDF. Other proteins may also be involved.

It is found in the cell membrane. Its subcellular location is the cytoplasm. The catalysed reaction is ATP + H2O + cellular proteinSide 1 = ADP + phosphate + cellular proteinSide 2.. Functionally, part of the Sec protein translocase complex. Interacts with the SecYEG preprotein conducting channel. Has a central role in coupling the hydrolysis of ATP to the transfer of proteins into and across the cell membrane, serving as an ATP-driven molecular motor driving the stepwise translocation of polypeptide chains across the membrane. The protein is Protein translocase subunit SecA of Mycoplasmopsis synoviae (strain 53) (Mycoplasma synoviae).